Reading from the N-terminus, the 235-residue chain is MSYGREDTTIEPDFIEPDAPLAASGGVADNIGGTMQNSGSRGTLDETVLQTLKRDVVEINSRLKQVVYPHFPSFFSPSDDGIGAADNDISANCDLWAPLAFIILYSLFVSHARSLFSSLFVSSWFILLVMALHLRLTKPHQRVSLISYISISGYCLFPQVLNALVSQILLPLAYHIGKQNRWIVRVLSLVKLVVMALCLMWSVAAVSWVTKSKTIIEIYPLALCLFGMAWLSTIL.

Helical transmembrane passes span 89-109 (ISAN…SLFV), 114-134 (SLFS…ALHL), 145-165 (LISY…NALV), 186-206 (VLSL…VAAV), and 215-235 (IIEI…STIL).

It belongs to the YIP1 family. Interacts with TVP18, TVP23, YIP1 and YIP5. Interacts with SEC4, YPT1, YPT6, YPT7, YPT10, YPT11, YPT31, YPT32 and YPT52; These proteins are all Rab GTPases.

Its subcellular location is the golgi apparatus membrane. Its function is as follows. May be involved in proper membrane localization of Rab GTPases. The sequence is that of Protein YIP4 (YIP4) from Saccharomyces cerevisiae (strain ATCC 204508 / S288c) (Baker's yeast).